We begin with the raw amino-acid sequence, 191 residues long: Pyridoxal 5'-phosphate synthase subunit PdxT (191 aa).

48-50 (GES) contributes to the L-glutamine binding site. The active-site Nucleophile is Cys81. L-glutamine contacts are provided by residues Arg109 and 136 to 137 (IR). Residues His172 and Glu174 each act as charge relay system in the active site.

It belongs to the glutaminase PdxT/SNO family. In the presence of PdxS, forms a dodecamer of heterodimers. Only shows activity in the heterodimer.

The enzyme catalyses aldehydo-D-ribose 5-phosphate + D-glyceraldehyde 3-phosphate + L-glutamine = pyridoxal 5'-phosphate + L-glutamate + phosphate + 3 H2O + H(+). The catalysed reaction is L-glutamine + H2O = L-glutamate + NH4(+). Its pathway is cofactor biosynthesis; pyridoxal 5'-phosphate biosynthesis. Catalyzes the hydrolysis of glutamine to glutamate and ammonia as part of the biosynthesis of pyridoxal 5'-phosphate. The resulting ammonia molecule is channeled to the active site of PdxS. This is Pyridoxal 5'-phosphate synthase subunit PdxT from Thermus thermophilus (strain ATCC BAA-163 / DSM 7039 / HB27).